The sequence spans 428 residues: Dihydrolipoyllysine-residue acetyltransferase component of pyruvate dehydrogenase complex (428 aa).

The 76-residue stretch at Ala-2 to Asp-77 folds into the Lipoyl-binding domain. Lys-43 carries the N6-lipoyllysine modification. Positions Gly-88–Ala-123 are disordered. Residues Gln-89–Asp-110 show a composition bias toward basic and acidic residues. The span at Ala-111–Ala-123 shows a compositional bias: low complexity. The Peripheral subunit-binding (PSBD) domain occupies Ile-130 to Leu-167. The span at Ala-177–Gly-194 shows a compositional bias: low complexity. The disordered stretch occupies residues Ala-177–Glu-201. His-399 is an active-site residue.

It belongs to the 2-oxoacid dehydrogenase family. As to quaternary structure, forms a 60-polypeptide structural core with icosahedral symmetry. It depends on (R)-lipoate as a cofactor.

It carries out the reaction N(6)-[(R)-dihydrolipoyl]-L-lysyl-[protein] + acetyl-CoA = N(6)-[(R)-S(8)-acetyldihydrolipoyl]-L-lysyl-[protein] + CoA. Its function is as follows. The pyruvate dehydrogenase complex catalyzes the overall conversion of pyruvate to acetyl-CoA and CO(2). It contains multiple copies of three enzymatic components: pyruvate dehydrogenase (E1), dihydrolipoamide acetyltransferase (E2) and lipoamide dehydrogenase (E3). The chain is Dihydrolipoyllysine-residue acetyltransferase component of pyruvate dehydrogenase complex (pdhC) from Geobacillus stearothermophilus (Bacillus stearothermophilus).